A 549-amino-acid polypeptide reads, in one-letter code: Cytoplasmic trehalase (549 aa).

Residues Arg168, 175–176, Asn212, 221–223, 292–294, and Gly324 each bind substrate; these read WD, RSQ, and RDE. Active-site proton donor/acceptor residues include Asp326 and Glu509. Glu525 contributes to the substrate binding site.

The protein belongs to the glycosyl hydrolase 37 family. In terms of assembly, monomer.

It is found in the cytoplasm. The catalysed reaction is alpha,alpha-trehalose + H2O = alpha-D-glucose + beta-D-glucose. It participates in glycan degradation; trehalose degradation; D-glucose from alpha,alpha-trehalose: step 1/1. Functionally, hydrolyzes trehalose to glucose. Could be involved, in cells returning to low osmolarity conditions, in the utilization of the accumulated cytoplasmic trehalose, which was synthesized in response to high osmolarity. The polypeptide is Cytoplasmic trehalase (Salmonella schwarzengrund (strain CVM19633)).